A 595-amino-acid chain; its full sequence is MHRYRSHTCAALRKSDVGETVRLSGWVHRVRDHGGVLFIDLRDHYGITQVVADPDSPAFKVAETVRGEWVIRIDGLVKARSEDTINKGMATGEIELYAQEIEVLGVAKELPLPVFGEPEYPEDVRLKYRFLDLRRETLHRNIVKRTQIISSMRKGMGDLGFAEYTTPILTASSPEGARDFLVPSRIHEGQFFALPQAPQQYKQLLMVAGFDRYFQIAPCFRDEDPRADRLPGEFYQLDVEMSFVTQEDVWTTMEPMMTAVFEQFAEGKPVTKQWPRIPYDESIRKYGSDKPDLRNPIVMEAVTEHFDGSGFKVFANMIASNPKVQVWAIPAKTGGSRAFCDRMNAWAQSQGQPGLGYIFWKEEEGKVAGSGPLAKNIGEERTEALRQQLGLEAGDACFFVAGDPAKFYKFAGEARTRAADELNLIDRDRFEMCWIVDFPFFEYNEEEKKIDFAHNPFSMPQGGMEALEGQDPLSIKAFQYDAVCNGFEIASGSIRNQSPELMVKAFEKVGLSQSDVEERFGGLYRAFQYGAPPHGGCAFGIDRVVMLLVGAKNLREITLFPMNQQAQDLLMNAPSPATPTQLRELALRVVPSKKD.

Residue glutamate 175 participates in L-aspartate binding. The tract at residues 199–202 (QQYK) is aspartate. L-aspartate contacts are provided by arginine 221 and histidine 454. 221 to 223 (RDE) serves as a coordination point for ATP. Glutamate 488 lines the ATP pocket. Arginine 495 lines the L-aspartate pocket. 540 to 543 (GIDR) lines the ATP pocket.

The protein belongs to the class-II aminoacyl-tRNA synthetase family. Type 1 subfamily. As to quaternary structure, homodimer.

It localises to the cytoplasm. It carries out the reaction tRNA(Asx) + L-aspartate + ATP = L-aspartyl-tRNA(Asx) + AMP + diphosphate. In terms of biological role, aspartyl-tRNA synthetase with relaxed tRNA specificity since it is able to aspartylate not only its cognate tRNA(Asp) but also tRNA(Asn). Reaction proceeds in two steps: L-aspartate is first activated by ATP to form Asp-AMP and then transferred to the acceptor end of tRNA(Asp/Asn). The sequence is that of Aspartate--tRNA(Asp/Asn) ligase from Agrobacterium fabrum (strain C58 / ATCC 33970) (Agrobacterium tumefaciens (strain C58)).